Here is an 81-residue protein sequence, read N- to C-terminus: Photosystem I iron-sulfur center (81 aa).

4Fe-4S ferredoxin-type domains are found at residues 2–31 (SHSV…MVPW) and 37–68 (GQIA…IRVY). Cys-11, Cys-14, Cys-17, Cys-21, Cys-48, Cys-51, Cys-54, and Cys-58 together coordinate [4Fe-4S] cluster.

As to quaternary structure, the cyanobacterial PSI reaction center is composed of one copy each of PsaA,B,C,D,E,F,I,J,K,L,M and X, and forms trimeric complexes. It depends on [4Fe-4S] cluster as a cofactor.

It is found in the cellular thylakoid membrane. It carries out the reaction reduced [plastocyanin] + hnu + oxidized [2Fe-2S]-[ferredoxin] = oxidized [plastocyanin] + reduced [2Fe-2S]-[ferredoxin]. Apoprotein for the two 4Fe-4S centers FA and FB of photosystem I (PSI); essential for photochemical activity. FB is the terminal electron acceptor of PSI, donating electrons to ferredoxin. The C-terminus interacts with PsaA/B/D and helps assemble the protein into the PSI complex. Required for binding of PsaD and PsaE to PSI. PSI is a plastocyanin/cytochrome c6-ferredoxin oxidoreductase, converting photonic excitation into a charge separation, which transfers an electron from the donor P700 chlorophyll pair to the spectroscopically characterized acceptors A0, A1, FX, FA and FB in turn. In terms of biological role, mutant proteins with a 3Fe-4S center are not observed bound to PSI in vitro, and are probably not able to do so in vivo. This Picosynechococcus sp. (strain ATCC 27264 / PCC 7002 / PR-6) (Agmenellum quadruplicatum) protein is Photosystem I iron-sulfur center (psaC).